Consider the following 359-residue polypeptide: uncharacterized protein (359 aa).

The N-terminal stretch at 1–17 (MLGRSLTSVLIVPTGIG) is a signal peptide. Cysteine 18 carries N-palmitoyl cysteine lipidation. Cysteine 18 carries the S-diacylglycerol cysteine lipid modification.

It is found in the cell membrane. This is an uncharacterized protein from Synechococcus sp. (strain ATCC 27144 / PCC 6301 / SAUG 1402/1) (Anacystis nidulans).